A 305-amino-acid chain; its full sequence is Homoserine O-acetyltransferase (305 aa).

The Acyl-thioester intermediate role is filled by cysteine 142. Positions 163 and 192 each coordinate substrate. Histidine 235 functions as the Proton acceptor in the catalytic mechanism. Residue glutamate 237 is part of the active site. Arginine 249 contributes to the substrate binding site.

It belongs to the MetA family.

It is found in the cytoplasm. It carries out the reaction L-homoserine + acetyl-CoA = O-acetyl-L-homoserine + CoA. Its pathway is amino-acid biosynthesis; L-methionine biosynthesis via de novo pathway; O-acetyl-L-homoserine from L-homoserine: step 1/1. Functionally, transfers an acetyl group from acetyl-CoA to L-homoserine, forming acetyl-L-homoserine. This chain is Homoserine O-acetyltransferase, found in Roseobacter denitrificans (strain ATCC 33942 / OCh 114) (Erythrobacter sp. (strain OCh 114)).